The primary structure comprises 330 residues: 5-dehydro-2-deoxygluconokinase (330 aa).

The protein belongs to the carbohydrate kinase PfkB family.

The catalysed reaction is 5-dehydro-2-deoxy-D-gluconate + ATP = 6-phospho-5-dehydro-2-deoxy-D-gluconate + ADP + H(+). Its pathway is polyol metabolism; myo-inositol degradation into acetyl-CoA; acetyl-CoA from myo-inositol: step 5/7. Its function is as follows. Catalyzes the phosphorylation of 5-dehydro-2-deoxy-D-gluconate (2-deoxy-5-keto-D-gluconate or DKG) to 6-phospho-5-dehydro-2-deoxy-D-gluconate (DKGP). In Bacillus velezensis (strain DSM 23117 / BGSC 10A6 / LMG 26770 / FZB42) (Bacillus amyloliquefaciens subsp. plantarum), this protein is 5-dehydro-2-deoxygluconokinase.